The following is a 334-amino-acid chain: Malate dehydrogenase 2 (334 aa).

19-25 contacts NAD(+); the sequence is IGAGKVG. The substrate site is built by Arg100 and Arg106. NAD(+)-binding positions include Asn113 and 136-138; that span reads VSN. Residues Asn138 and Arg169 each contribute to the substrate site. His193 acts as the Proton acceptor in catalysis.

Belongs to the LDH/MDH superfamily.

It carries out the reaction (S)-malate + NAD(+) = oxaloacetate + NADH + H(+). Catalyzes the reversible oxidation of malate to oxaloacetate. This chain is Malate dehydrogenase 2, found in Aquifex aeolicus (strain VF5).